A 459-amino-acid chain; its full sequence is Elongation factor 1-alpha 4 (459 aa).

Residues 5 to 242 form the tr-type G domain; that stretch reads KTHINIVVIG…DCIIPPQRPT (238 aa). Residues 14 to 21 form a G1 region; that stretch reads GHVDSGKS. Positions 70–74 are G2; the sequence is GITID. The G3 stretch occupies residues 91–94; sequence DAPG. The G4 stretch occupies residues 153–156; the sequence is NKMD. A G5 region spans residues 194–196; the sequence is SGF. A 5-glutamyl glycerylphosphorylethanolamine mark is found at Glu-301 and Glu-374.

This sequence belongs to the TRAFAC class translation factor GTPase superfamily. Classic translation factor GTPase family. EF-Tu/EF-1A subfamily.

Its subcellular location is the cytoplasm. Its function is as follows. This protein promotes the GTP-dependent binding of aminoacyl-tRNA to the A-site of ribosomes during protein biosynthesis. The polypeptide is Elongation factor 1-alpha 4 (eft-4) (Oscheius tipulae).